The chain runs to 247 residues: Terpene cyclase adrI (247 aa).

The next 5 membrane-spanning stretches (helical) occupy residues 20–40 (VAEFLRILAGICWTLNYFSML), 51–71 (TGIFPLCNDIGWEFIYAFIYP), 76–96 (HWEGGVRVWFLVHCIVIFFII), 112–132 (NLYFLYGIVTIGFAIGQYSFA), and 141–161 (FFYGGVLCQTLASLGPIAQIL). N-linked (GlcNAc...) asparagine glycosylation occurs at Asn-164. Helical transmembrane passes span 179–199 (FGGFIKLTIYYLTGNAAGPWF) and 205–225 (KFYIGLTLILDFTYPICYYVI).

This sequence belongs to the paxB family.

It is found in the membrane. The protein operates within secondary metabolite biosynthesis; terpenoid biosynthesis. In terms of biological role, terpene cyclase; part of the gene cluster that mediates the biosynthesis of andrastins, meroterpenoid compounds that exhibit inhibitory activity against ras farnesyltransferase, suggesting that they could be promising leads for antitumor agents. The first step of the pathway is the synthesis of 3,5-dimethylorsellinic acid (DMOA) by the polyketide synthase adrD via condensation of one acetyl-CoA starter unit with 3 malonyl-CoA units and 2 methylations. DMAO is then converted to farnesyl-DMAO by the prenyltransferase adrG. The methyltransferase adrK catalyzes the methylation of the carboxyl group of farnesyl-DMAO to farnesyl-DMAO methyl ester which is further converted to epoxyfarnesyl-DMAO methyl ester by the FAD-dependent monooxygenase adrH. The terpene cyclase adrI then catalyzes the carbon skeletal rearrangement to generate the andrastin E, the first compound in the pathway having the andrastin scaffold, with the tetracyclic ring system. The post-cyclization tailoring enzymes adrF, adrE, adrJ, and adrA, are involved in the conversion of andrastin E into andrastin A. The short chain dehydrogenase adrF is responsible for the oxidation of the C-3 a hydroxyl group of andrastin E to yield the corresponding ketone, andrastin D. The ketoreductase adrE stereoselectively reduces the carbonyl moiety to reverse the stereochemistry of the C-3 position to yield andrastin F. The acetyltransferase adrJ is the acetyltransferase that attaches the acetyl group to the C-3 hydroxyl group of andrastin F to yield andrastin C. Finally, the cytochrome P450 monooxygenase adrA catalyzes two sequential oxidation reactions of the C-23 methyl group, to generate the corresponding alcohol andrastin B, and aldehyde andrastin A. The sequence is that of Terpene cyclase adrI from Penicillium rubens (strain ATCC 28089 / DSM 1075 / NRRL 1951 / Wisconsin 54-1255) (Penicillium chrysogenum).